The sequence spans 122 residues: Small ribosomal subunit protein uS13 (122 aa).

The tract at residues 95–122 (GLPVRGQRTHTNARTRKGPAKPIAGKKK) is disordered.

Belongs to the universal ribosomal protein uS13 family. As to quaternary structure, part of the 30S ribosomal subunit. Forms a loose heterodimer with protein S19. Forms two bridges to the 50S subunit in the 70S ribosome.

Functionally, located at the top of the head of the 30S subunit, it contacts several helices of the 16S rRNA. In the 70S ribosome it contacts the 23S rRNA (bridge B1a) and protein L5 of the 50S subunit (bridge B1b), connecting the 2 subunits; these bridges are implicated in subunit movement. Contacts the tRNAs in the A and P-sites. This Caulobacter sp. (strain K31) protein is Small ribosomal subunit protein uS13.